We begin with the raw amino-acid sequence, 364 residues long: DNA replication and repair protein RecF (364 aa).

30–37 (GKNAQGKT) provides a ligand contact to ATP.

It belongs to the RecF family.

It is found in the cytoplasm. The RecF protein is involved in DNA metabolism; it is required for DNA replication and normal SOS inducibility. RecF binds preferentially to single-stranded, linear DNA. It also seems to bind ATP. The chain is DNA replication and repair protein RecF from Geotalea uraniireducens (strain Rf4) (Geobacter uraniireducens).